A 312-amino-acid polypeptide reads, in one-letter code: Probable deoxyhypusine synthase (312 aa).

Lys-285 serves as the catalytic Nucleophile.

It belongs to the deoxyhypusine synthase family. NAD(+) is required as a cofactor.

The enzyme catalyses [eIF5A protein]-L-lysine + spermidine = [eIF5A protein]-deoxyhypusine + propane-1,3-diamine. It participates in protein modification; eIF5A hypusination. Its function is as follows. Catalyzes the NAD-dependent oxidative cleavage of spermidine and the subsequent transfer of the butylamine moiety of spermidine to the epsilon-amino group of a specific lysine residue of the eIF-5A precursor protein to form the intermediate deoxyhypusine residue. The chain is Probable deoxyhypusine synthase from Saccharolobus islandicus (strain Y.N.15.51 / Yellowstone #2) (Sulfolobus islandicus).